We begin with the raw amino-acid sequence, 220 residues long: 2-hydroxy-3-keto-5-methylthiopentenyl-1-phosphate phosphatase (220 aa).

This sequence belongs to the HAD-like hydrolase superfamily. MtnX family.

It carries out the reaction 2-hydroxy-5-methylsulfanyl-3-oxopent-1-enyl phosphate + H2O = 1,2-dihydroxy-5-(methylsulfanyl)pent-1-en-3-one + phosphate. It functions in the pathway amino-acid biosynthesis; L-methionine biosynthesis via salvage pathway; L-methionine from S-methyl-5-thio-alpha-D-ribose 1-phosphate: step 4/6. In terms of biological role, dephosphorylates 2-hydroxy-3-keto-5-methylthiopentenyl-1-phosphate (HK-MTPenyl-1-P) yielding 1,2-dihydroxy-3-keto-5-methylthiopentene (DHK-MTPene). The protein is 2-hydroxy-3-keto-5-methylthiopentenyl-1-phosphate phosphatase of Geobacillus kaustophilus (strain HTA426).